The sequence spans 391 residues: Phosphoprotein (391 aa).

Phosphothreonine is present on residues threonine 10 and threonine 16. The segment covering 54 to 65 (QKNIQHPTASHQ) has biased composition (polar residues). 2 disordered regions span residues 54 to 98 (QKNI…EPLF) and 145 to 186 (TSTP…RSGS). Serine 69 carries the phosphoserine modification. Phosphothreonine is present on residues threonine 91, threonine 150, and threonine 165. A Phosphoserine modification is found at serine 188. The stretch at 218-245 (ANEIMDLLRGMDARLQHLEQKVDKVLAQ) forms a coiled coil. Threonine 250 is modified (phosphothreonine). Serine 257 carries the post-translational modification Phosphoserine. 2 positions are modified to phosphothreonine: threonine 258 and threonine 282. Phosphoserine occurs at positions 292 and 294. Threonine 298 carries the phosphothreonine modification. Phosphoserine is present on residues serine 301 and serine 374. The interval 343-391 (AGRKVMITKMITDCVANPQMKQAFEQRLAKASTEDALNDIKRDIIRNAI) is interaction with the nucleoprotein. Threonine 375 carries the phosphothreonine modification.

It belongs to the rubulavirus/avulavirus P protein family. Homotetramer. Interacts (via multimerization domain) with polymerase L; this interaction forms the polymerase L-P complex. Interacts (via N-terminus) with N0 (via Ncore); this interaction allows P to chaperon N0 to avoid N polymerization before encapsidation. Interacts (via C-terminus) with N-RNA template; this interaction positions the polymerase on the template for both transcription and replication. Interacts with host RPS6KB1 kinase; this interaction may play a role in the viral replication and transcription.

The protein localises to the virion. In terms of biological role, essential cofactor of the RNA polymerase L that plays a central role in the transcription and replication by forming the polymerase complex with RNA polymerase L and recruiting L to the genomic N-RNA template for RNA synthesis. Also plays a central role in the encapsidation of nascent RNA chains by forming the encapsidation complex with the nucleocapsid protein N (N-P complex). Acts as a chaperone for newly synthesized free N protein, so-called N0, allowing encapsidation of nascent RNA chains during replication. The nucleoprotein protein N prevents excessive phosphorylation of P, which leads to down-regulation of viral transcription/ replication. Participates, together with N, in the formation of viral factories (viroplasms), which are large inclusions in the host cytoplasm where replication takes place. The protein is Phosphoprotein of Mumps virus genotype N (strain L-Zagreb vaccine) (MuV).